Here is a 403-residue protein sequence, read N- to C-terminus: Protein-export membrane protein SecD (403 aa).

The next 6 membrane-spanning stretches (helical) occupy residues 13 to 33 (LLVI…KGVN), 245 to 265 (FLKM…VIIA), 285 to 305 (VVFL…PALA), 306 to 326 (GIIL…DEIV), 347 to 367 (VVLA…VAGM), and 368 to 388 (GLLK…VVIT).

It belongs to the SecD/SecF family. SecD subfamily. As to quaternary structure, part of the protein translocation apparatus. Forms a complex with SecF.

It is found in the cell membrane. Functionally, involved in protein export. In Methanopyrus kandleri (strain AV19 / DSM 6324 / JCM 9639 / NBRC 100938), this protein is Protein-export membrane protein SecD.